The sequence spans 203 residues: Cold-regulated 413 plasma membrane protein 2 (203 aa).

Over 1–43 (MGRMDYLAMKTDDVDTVALVNSDMEELKVAAKKLFSDVSKLGG) the chain is Extracellular. A helical membrane pass occupies residues 44 to 64 (LGFGVSFLKFLASFAAIYLLI). Residues 65-74 (LDRTNWKTKM) lie on the Cytoplasmic side of the membrane. Residues 75–95 (LTSLLIPYIFLSLPSVIFNFL) form a helical membrane-spanning segment. The Extracellular portion of the chain corresponds to 96-98 (SGD). Residues 99–119 (VGKWIAFVAVVLRLFFPKHFP) form a helical membrane-spanning segment. A topological domain (cytoplasmic) is located at residue aspartate 120. Residues 121–141 (WLEMPGSLILLLVVSPHFLAH) traverse the membrane as a helical segment. Residues 142–144 (HIR) are Extracellular-facing. The helical transmembrane segment at 145-165 (GTWIGTVISLFIGCYLLQEHI) threads the bilayer. Topologically, residues 166–179 (RASGGFRNSFTQPR) are cytoplasmic. A helical transmembrane segment spans residues 180 to 200 (GVSNTLGIILLLVYPVWALIV). The Extracellular portion of the chain corresponds to 201 to 203 (RVM).

It belongs to the Cold-regulated 413 protein family.

The protein resides in the cell membrane. In Arabidopsis thaliana (Mouse-ear cress), this protein is Cold-regulated 413 plasma membrane protein 2 (COR413PM2).